The primary structure comprises 693 residues: DNA ligase (693 aa).

NAD(+) is bound by residues 43 to 47 (DEEYD), 92 to 93 (SL), and Glu-123. Catalysis depends on Lys-125, which acts as the N6-AMP-lysine intermediate. NAD(+) is bound by residues Arg-146, Glu-180, Lys-296, and Lys-320. Positions 414, 417, 433, and 438 each coordinate Zn(2+). The 90-residue stretch at 595–684 (VKYDVLKGLT…AKLKGYNFDE (90 aa)) folds into the BRCT domain.

The protein belongs to the NAD-dependent DNA ligase family. LigA subfamily. Requires Mg(2+) as cofactor. Mn(2+) serves as cofactor.

It carries out the reaction NAD(+) + (deoxyribonucleotide)n-3'-hydroxyl + 5'-phospho-(deoxyribonucleotide)m = (deoxyribonucleotide)n+m + AMP + beta-nicotinamide D-nucleotide.. In terms of biological role, DNA ligase that catalyzes the formation of phosphodiester linkages between 5'-phosphoryl and 3'-hydroxyl groups in double-stranded DNA using NAD as a coenzyme and as the energy source for the reaction. It is essential for DNA replication and repair of damaged DNA. The protein is DNA ligase of Thermotoga neapolitana (strain ATCC 49049 / DSM 4359 / NBRC 107923 / NS-E).